A 203-amino-acid chain; its full sequence is Dephospho-CoA kinase (203 aa).

The region spanning 4-203 is the DPCK domain; sequence VIGITGGIAT…EEGYIQSESE (200 aa). 12-17 contributes to the ATP binding site; that stretch reads ATGKST.

This sequence belongs to the CoaE family.

The protein resides in the cytoplasm. The catalysed reaction is 3'-dephospho-CoA + ATP = ADP + CoA + H(+). Its pathway is cofactor biosynthesis; coenzyme A biosynthesis; CoA from (R)-pantothenate: step 5/5. Functionally, catalyzes the phosphorylation of the 3'-hydroxyl group of dephosphocoenzyme A to form coenzyme A. This is Dephospho-CoA kinase from Staphylococcus epidermidis (strain ATCC 12228 / FDA PCI 1200).